A 230-amino-acid polypeptide reads, in one-letter code: Cytidylate kinase (230 aa).

12 to 20 (GPSGAGKGT) is an ATP binding site.

This sequence belongs to the cytidylate kinase family. Type 1 subfamily.

The protein localises to the cytoplasm. It catalyses the reaction CMP + ATP = CDP + ADP. It carries out the reaction dCMP + ATP = dCDP + ADP. The protein is Cytidylate kinase of Shewanella sp. (strain MR-4).